Reading from the N-terminus, the 122-residue chain is Large ribosomal subunit protein uL14 (122 aa).

Belongs to the universal ribosomal protein uL14 family. As to quaternary structure, part of the 50S ribosomal subunit. Forms a cluster with proteins L3 and L19. In the 70S ribosome, L14 and L19 interact and together make contacts with the 16S rRNA in bridges B5 and B8.

In terms of biological role, binds to 23S rRNA. Forms part of two intersubunit bridges in the 70S ribosome. In Staphylococcus epidermidis (strain ATCC 35984 / DSM 28319 / BCRC 17069 / CCUG 31568 / BM 3577 / RP62A), this protein is Large ribosomal subunit protein uL14.